An 87-amino-acid chain; its full sequence is Small ribosomal subunit protein bS20 (87 aa).

The segment at 1–25 is disordered; sequence MANIKSAKKRAVQSEKRRKHNASRR.

The protein belongs to the bacterial ribosomal protein bS20 family.

In terms of biological role, binds directly to 16S ribosomal RNA. The chain is Small ribosomal subunit protein bS20 from Yersinia pseudotuberculosis serotype O:1b (strain IP 31758).